The primary structure comprises 678 residues: Translation factor GUF1 homolog, chloroplastic (678 aa).

Residues 1-43 constitute a chloroplast transit peptide; that stretch reads MASILLSLNTHTLLPLHTRTRTTKTTLKILRFSHKLPPSSPFY. Residues 81 to 262 form the tr-type G domain; sequence KNIRNFCIIA…AIVERVPPPR (182 aa). Residues 90–97, 155–159, and 209–212 contribute to the GTP site; these read AHIDHGKS, DTPGH, and NKID.

This sequence belongs to the TRAFAC class translation factor GTPase superfamily. Classic translation factor GTPase family. LepA subfamily.

It is found in the plastid. Its subcellular location is the chloroplast. It carries out the reaction GTP + H2O = GDP + phosphate + H(+). Promotes chloroplast protein synthesis. May act as a fidelity factor of the translation reaction, by catalyzing a one-codon backward translocation of tRNAs on improperly translocated ribosomes. This chain is Translation factor GUF1 homolog, chloroplastic, found in Populus trichocarpa (Western balsam poplar).